A 105-amino-acid polypeptide reads, in one-letter code: Large ribosomal subunit protein bL21 (105 aa).

The protein belongs to the bacterial ribosomal protein bL21 family. As to quaternary structure, part of the 50S ribosomal subunit. Contacts protein L20.

Its function is as follows. This protein binds to 23S rRNA in the presence of protein L20. The polypeptide is Large ribosomal subunit protein bL21 (Rickettsia canadensis (strain McKiel)).